We begin with the raw amino-acid sequence, 29 residues long: Cytochrome b6-f complex subunit 8 (29 aa).

The chain crosses the membrane as a helical span at residues isoleucine 3–valine 23.

This sequence belongs to the PetN family. As to quaternary structure, the 4 large subunits of the cytochrome b6-f complex are cytochrome b6, subunit IV (17 kDa polypeptide, PetD), cytochrome f and the Rieske protein, while the 4 small subunits are PetG, PetL, PetM and PetN. The complex functions as a dimer.

Its subcellular location is the cellular thylakoid membrane. In terms of biological role, component of the cytochrome b6-f complex, which mediates electron transfer between photosystem II (PSII) and photosystem I (PSI), cyclic electron flow around PSI, and state transitions. In Mastigocladus laminosus (Fischerella sp.), this protein is Cytochrome b6-f complex subunit 8.